The following is a 460-amino-acid chain: Bifunctional protein GlmU (460 aa).

The tract at residues methionine 1–lysine 229 is pyrophosphorylase. UDP-N-acetyl-alpha-D-glucosamine-binding positions include leucine 9–glycine 12, lysine 23, glutamine 74, glycine 79–threonine 80, tyrosine 101–aspartate 103, glycine 138, glutamate 154, asparagine 169, and asparagine 227. Aspartate 103 contributes to the Mg(2+) binding site. Residue asparagine 227 participates in Mg(2+) binding. The interval valine 230–glutamine 250 is linker. Residues glycine 251–asparagine 460 are N-acetyltransferase. Residues arginine 333 and lysine 351 each contribute to the UDP-N-acetyl-alpha-D-glucosamine site. The Proton acceptor role is filled by histidine 363. Residues tyrosine 366 and asparagine 377 each coordinate UDP-N-acetyl-alpha-D-glucosamine. Acetyl-CoA-binding positions include alanine 380, asparagine 386–tyrosine 387, serine 405, alanine 423, and arginine 440.

The protein in the N-terminal section; belongs to the N-acetylglucosamine-1-phosphate uridyltransferase family. In the C-terminal section; belongs to the transferase hexapeptide repeat family. As to quaternary structure, homotrimer. It depends on Mg(2+) as a cofactor.

Its subcellular location is the cytoplasm. The catalysed reaction is alpha-D-glucosamine 1-phosphate + acetyl-CoA = N-acetyl-alpha-D-glucosamine 1-phosphate + CoA + H(+). It carries out the reaction N-acetyl-alpha-D-glucosamine 1-phosphate + UTP + H(+) = UDP-N-acetyl-alpha-D-glucosamine + diphosphate. It participates in nucleotide-sugar biosynthesis; UDP-N-acetyl-alpha-D-glucosamine biosynthesis; N-acetyl-alpha-D-glucosamine 1-phosphate from alpha-D-glucosamine 6-phosphate (route II): step 2/2. The protein operates within nucleotide-sugar biosynthesis; UDP-N-acetyl-alpha-D-glucosamine biosynthesis; UDP-N-acetyl-alpha-D-glucosamine from N-acetyl-alpha-D-glucosamine 1-phosphate: step 1/1. It functions in the pathway bacterial outer membrane biogenesis; LPS lipid A biosynthesis. Its function is as follows. Catalyzes the last two sequential reactions in the de novo biosynthetic pathway for UDP-N-acetylglucosamine (UDP-GlcNAc). The C-terminal domain catalyzes the transfer of acetyl group from acetyl coenzyme A to glucosamine-1-phosphate (GlcN-1-P) to produce N-acetylglucosamine-1-phosphate (GlcNAc-1-P), which is converted into UDP-GlcNAc by the transfer of uridine 5-monophosphate (from uridine 5-triphosphate), a reaction catalyzed by the N-terminal domain. In Nitrosospira multiformis (strain ATCC 25196 / NCIMB 11849 / C 71), this protein is Bifunctional protein GlmU.